A 131-amino-acid chain; its full sequence is MIEVAEFIAREVKKGKVIEVGIGFYTRIAKRLKELGFDVLAIDINKDAVVNAKNSGLNAEVDDIFNPNISLYMGAKAIYSIRPTPEMMNYILKISKAVKVPAYIVPLTGDPVPQGMKLITYRGIPIYKWEP.

It belongs to the UPF0146 family.

The protein is UPF0146 protein PYRAB01940 of Pyrococcus abyssi (strain GE5 / Orsay).